We begin with the raw amino-acid sequence, 1070 residues long: Carbamoyl phosphate synthase large chain (1070 aa).

A carboxyphosphate synthetic domain region spans residues 1 to 401 (MPKRDDIKTI…ALLKAVRSLE (401 aa)). ATP-binding residues include R129, R169, G175, G176, K208, I210, E215, G241, I242, H243, Q284, and E298. The 195-residue stretch at 133 to 327 (RDLMNELGEP…IAKLAAKIAV (195 aa)) folds into the ATP-grasp 1 domain. Mg(2+) contacts are provided by Q284, E298, and N300. Residues Q284, E298, and N300 each contribute to the Mn(2+) site. An oligomerization domain region spans residues 402-546 (IGADHLLLEE…YSTYEEENES (145 aa)). Positions 547 to 929 (TRSAKESVIV…ALYKGFVASG (383 aa)) are carbamoyl phosphate synthetic domain. In terms of domain architecture, ATP-grasp 2 spans 671-861 (EKALGILQIP…MANVATRVIL (191 aa)). ATP-binding residues include R707, R746, V748, E752, G777, V778, H779, S780, Q820, and E832. The Mg(2+) site is built by Q820, E832, and N834. The Mn(2+) site is built by Q820, E832, and N834. An MGS-like domain is found at 930 to 1070 (TTMHDYGTVL…SEVKQPKARV (141 aa)). Residues 930–1070 (TTMHDYGTVL…SEVKQPKARV (141 aa)) form an allosteric domain region.

Belongs to the CarB family. In terms of assembly, composed of two chains; the small (or glutamine) chain promotes the hydrolysis of glutamine to ammonia, which is used by the large (or ammonia) chain to synthesize carbamoyl phosphate. Tetramer of heterodimers (alpha,beta)4. It depends on Mg(2+) as a cofactor. Mn(2+) serves as cofactor.

The enzyme catalyses hydrogencarbonate + L-glutamine + 2 ATP + H2O = carbamoyl phosphate + L-glutamate + 2 ADP + phosphate + 2 H(+). It carries out the reaction hydrogencarbonate + NH4(+) + 2 ATP = carbamoyl phosphate + 2 ADP + phosphate + 2 H(+). Its pathway is amino-acid biosynthesis; L-arginine biosynthesis; carbamoyl phosphate from bicarbonate: step 1/1. It functions in the pathway pyrimidine metabolism; UMP biosynthesis via de novo pathway; (S)-dihydroorotate from bicarbonate: step 1/3. Its function is as follows. Large subunit of the glutamine-dependent carbamoyl phosphate synthetase (CPSase). CPSase catalyzes the formation of carbamoyl phosphate from the ammonia moiety of glutamine, carbonate, and phosphate donated by ATP, constituting the first step of 2 biosynthetic pathways, one leading to arginine and/or urea and the other to pyrimidine nucleotides. The large subunit (synthetase) binds the substrates ammonia (free or transferred from glutamine from the small subunit), hydrogencarbonate and ATP and carries out an ATP-coupled ligase reaction, activating hydrogencarbonate by forming carboxy phosphate which reacts with ammonia to form carbamoyl phosphate. In Listeria monocytogenes serotype 4b (strain CLIP80459), this protein is Carbamoyl phosphate synthase large chain.